Here is a 449-residue protein sequence, read N- to C-terminus: UDP-N-acetylmuramoylalanine--D-glutamate ligase (449 aa).

Position 107–113 (107–113 (GSNGKST)) interacts with ATP.

It belongs to the MurCDEF family.

The protein resides in the cytoplasm. The enzyme catalyses UDP-N-acetyl-alpha-D-muramoyl-L-alanine + D-glutamate + ATP = UDP-N-acetyl-alpha-D-muramoyl-L-alanyl-D-glutamate + ADP + phosphate + H(+). Its pathway is cell wall biogenesis; peptidoglycan biosynthesis. Its function is as follows. Cell wall formation. Catalyzes the addition of glutamate to the nucleotide precursor UDP-N-acetylmuramoyl-L-alanine (UMA). The sequence is that of UDP-N-acetylmuramoylalanine--D-glutamate ligase from Hydrogenovibrio crunogenus (strain DSM 25203 / XCL-2) (Thiomicrospira crunogena).